The sequence spans 818 residues: Actin filament-associated protein 1-like 2 (818 aa).

Tyr56 is subject to Phosphotyrosine. The segment at 66–163 (QNAESQGKAP…SKGKSAPYQW (98 aa)) is disordered. The segment covering 85–94 (EPSQHSSAPQ) has biased composition (polar residues). The segment covering 123–139 (YYEEAEPYDTSLNEDGE) has biased composition (acidic residues). PH domains follow at residues 175-271 (DARI…EVSG) and 353-447 (SLET…SESG). Ser408 is subject to Phosphoserine. The residue at position 413 (Tyr413) is a Phosphotyrosine. Ser484 carries the phosphoserine modification. A disordered region spans residues 513–532 (AAVEPTEEATPVADDPNERE). Residues 652–749 (AEIKLGKNRT…VKDNLKKAEA (98 aa)) are a coiled coil. The tract at residues 765–787 (NVSPRPKAVTPASAPDCTPVNSA) is disordered.

As to quaternary structure, interacts with SRC. Interacts with LCK when tyrosine phosphorylated. Post-translationally, tyrosine phosphorylated (by SRC). Detected in spleen and thyroid, and at lower levels in kidney, brain, lung and pancreas.

The protein localises to the cytoplasm. Functionally, may play a role in a signaling cascade by enhancing the kinase activity of SRC. Contributes to SRC-regulated transcription activation. The polypeptide is Actin filament-associated protein 1-like 2 (AFAP1L2) (Homo sapiens (Human)).